Reading from the N-terminus, the 59-residue chain is U-myrmeciitoxin(01)-Mg5a (59 aa).

Positions 1-21 (MRLSYLSLALAIIFVLTIMHA) are cleaved as a signal peptide. A propeptide spanning residues 22–38 (SNVEAKASADPEPDAVG) is cleaved from the precursor.

As to expression, expressed by the venom gland.

The protein resides in the secreted. In terms of biological role, may have antimicrobial properties, like most ant linear peptides. The protein is U-myrmeciitoxin(01)-Mg5a of Myrmecia gulosa (Red bulldog ant).